The primary structure comprises 336 residues: DNA-directed RNA polymerase subunit alpha (336 aa).

The segment at 1–232 is alpha N-terminal domain (alpha-NTD); that stretch reads MIQKNWQELI…DQLSVFVNFD (232 aa). Residues 248-336 form an alpha C-terminal domain (alpha-CTD) region; that stretch reads FNPALLKKVD…DLAKRYEDQY (89 aa).

It belongs to the RNA polymerase alpha chain family. Homodimer. The RNAP catalytic core consists of 2 alpha, 1 beta, 1 beta' and 1 omega subunit. When a sigma factor is associated with the core the holoenzyme is formed, which can initiate transcription.

It carries out the reaction RNA(n) + a ribonucleoside 5'-triphosphate = RNA(n+1) + diphosphate. DNA-dependent RNA polymerase catalyzes the transcription of DNA into RNA using the four ribonucleoside triphosphates as substrates. This is DNA-directed RNA polymerase subunit alpha from Sinorhizobium medicae (strain WSM419) (Ensifer medicae).